The following is a 186-amino-acid chain: Ribosome-recycling factor (186 aa).

The protein belongs to the RRF family.

The protein resides in the cytoplasm. Its function is as follows. Responsible for the release of ribosomes from messenger RNA at the termination of protein biosynthesis. May increase the efficiency of translation by recycling ribosomes from one round of translation to another. This Cupriavidus pinatubonensis (strain JMP 134 / LMG 1197) (Cupriavidus necator (strain JMP 134)) protein is Ribosome-recycling factor.